The following is a 485-amino-acid chain: Putative E3 ubiquitin-protein ligase makorin-4 (485 aa).

Residues 1-32 (MAEAAAPGTTVTTSGAGAAAAEAAETAEAVSP) show a composition bias toward low complexity. The segment at 1-63 (MAEAAAPGTT…GSDGSGGRGD (63 aa)) is disordered. Gly residues predominate over residues 45 to 63 (AGGGVGGSDGSDGSGGRGD). C3H1-type zinc fingers lie at residues 90-117 (WTKQ…HDLS), 124-146 (VCKY…HSKP), and 243-270 (ETKK…HGDL). A makorin-type Cys-His region spans residues 271 to 298 (CDMCGLQVLHPMDAAQRSQHIQACIEAH). Residues 316–370 (CGICMEVVYEKANPNEHRFGILSNCNHTFCLKCIRKWRSAKEFESRIVKSCPQCR) form an RING-type zinc finger. The segment at 399–428 (AMSNKACKYFDEGRGSCPFGENCFYKHMYP) adopts a C3H1-type 4 zinc-finger fold.

The catalysed reaction is S-ubiquitinyl-[E2 ubiquitin-conjugating enzyme]-L-cysteine + [acceptor protein]-L-lysine = [E2 ubiquitin-conjugating enzyme]-L-cysteine + N(6)-ubiquitinyl-[acceptor protein]-L-lysine.. The protein operates within protein modification; protein ubiquitination. May act as a E3 ubiquitin ligase catalyzing the covalent attachment of ubiquitin moieties onto substrate proteins. This Homo sapiens (Human) protein is Putative E3 ubiquitin-protein ligase makorin-4 (MKRN4P).